We begin with the raw amino-acid sequence, 410 residues long: Protein trichome birefringence-like 34 (410 aa).

The chain crosses the membrane as a helical; Signal-anchor for type II membrane protein span at residues 13–33 (TSFHTIAAVLVAGLIFTAVFL). The GDS motif signature appears at 133–135 (GDS). The DCXHWCLPGXXDXWN motif signature appears at 383–397 (DCIHWCLPGVPDVWN).

It belongs to the PC-esterase family. TBL subfamily.

The protein localises to the golgi apparatus membrane. Functionally, may act as a bridging protein that binds pectin and other cell wall polysaccharides. Probably involved in maintaining esterification of pectins. May be involved in the specific O-acetylation of cell wall polymers. This chain is Protein trichome birefringence-like 34 (TBL34), found in Arabidopsis thaliana (Mouse-ear cress).